Here is a 776-residue protein sequence, read N- to C-terminus: Peregrinol diphosphate synthase CPS1, chloroplastic (776 aa).

A chloroplast-targeting transit peptide spans 1–17 (MASTPTLNLSITTPFVR). Substrate is bound at residue Lys-238. Mg(2+)-binding residues include Asp-371 and Asp-373. The DXDD motif signature appears at 371-374 (DIDD). Lys-457 is a substrate binding site.

It belongs to the terpene synthase family. Mg(2+) is required as a cofactor. Present in both leaves and flowers, with higher levels in leaves.

It is found in the plastid. It localises to the chloroplast. The catalysed reaction is peregrinol diphosphate = (2E,6E,10E)-geranylgeranyl diphosphate + H2O. Its pathway is secondary metabolite biosynthesis; terpenoid biosynthesis. Its function is as follows. Involved in the biosynthesis of labdane-type diterpenoid including marrubiin and other labdane-related furanoid diterpenoids with potential applications as anti-diabetics, analgesics or vasorelaxants. Terpene synthase that produces peregrinol diphosphate from geranylgeranyl diphosphate (GGPP). The sequence is that of Peregrinol diphosphate synthase CPS1, chloroplastic from Marrubium vulgare (White horehound).